Consider the following 401-residue polypeptide: Phosphoglycerate kinase (401 aa).

Substrate is bound by residues 29-31 (DFN), arginine 45, 69-72 (HLGR), arginine 125, and arginine 158. Residues lysine 209, glutamate 331, and 357–360 (GGDT) contribute to the ATP site.

The protein belongs to the phosphoglycerate kinase family. In terms of assembly, monomer.

The protein localises to the cytoplasm. It carries out the reaction (2R)-3-phosphoglycerate + ATP = (2R)-3-phospho-glyceroyl phosphate + ADP. The protein operates within carbohydrate degradation; glycolysis; pyruvate from D-glyceraldehyde 3-phosphate: step 2/5. In Wolinella succinogenes (strain ATCC 29543 / DSM 1740 / CCUG 13145 / JCM 31913 / LMG 7466 / NCTC 11488 / FDC 602W) (Vibrio succinogenes), this protein is Phosphoglycerate kinase.